Reading from the N-terminus, the 363-residue chain is Fructose-bisphosphate aldolase C (363 aa).

Y5 carries the post-translational modification Phosphotyrosine. 3 positions are modified to phosphoserine: S36, S39, and S45. Substrate is bound at residue R56. At K111 the chain carries N6-acetyllysine. Residue K147 participates in substrate binding. The Proton acceptor role is filled by E188. Catalysis depends on K230, which acts as the Schiff-base intermediate with dihydroxyacetone-P.

The protein belongs to the class I fructose-bisphosphate aldolase family. Homotetramer. Interacts with ATP6V1E1. High expression in the adult brain.

The enzyme catalyses beta-D-fructose 1,6-bisphosphate = D-glyceraldehyde 3-phosphate + dihydroxyacetone phosphate. The protein operates within carbohydrate degradation; glycolysis; D-glyceraldehyde 3-phosphate and glycerone phosphate from D-glucose: step 4/4. This Rattus norvegicus (Rat) protein is Fructose-bisphosphate aldolase C (Aldoc).